Reading from the N-terminus, the 274-residue chain is Thiamine kinase (274 aa).

This sequence belongs to the thiamine kinase family.

The enzyme catalyses thiamine + ATP = thiamine phosphate + ADP + H(+). The protein operates within cofactor biosynthesis; thiamine diphosphate biosynthesis; thiamine phosphate from thiamine: step 1/1. Catalyzes the ATP-dependent phosphorylation of thiamine to thiamine phosphate. Is involved in thiamine salvage. The chain is Thiamine kinase from Escherichia coli O157:H7 (strain EC4115 / EHEC).